The following is a 330-amino-acid chain: Peroxidase 70 (330 aa).

A signal peptide spans 1 to 24 (MRSFTNLNPCYVLLPFFLVLATNA). 4 disulfide bridges follow: Cys-43/Cys-119, Cys-76/Cys-81, Cys-125/Cys-326, and Cys-202/Cys-234. His-74 functions as the Proton acceptor in the catalytic mechanism. Positions 75, 78, 80, 82, and 84 each coordinate Ca(2+). Pro-165 is a binding site for substrate. Heme b is bound at residue His-195. Thr-196 contacts Ca(2+). Ca(2+) is bound by residues Asp-247, Ser-250, and Asp-255.

Belongs to the peroxidase family. Classical plant (class III) peroxidase subfamily. The cofactor is heme b. It depends on Ca(2+) as a cofactor.

The protein localises to the secreted. The enzyme catalyses 2 a phenolic donor + H2O2 = 2 a phenolic radical donor + 2 H2O. Removal of H(2)O(2), oxidation of toxic reductants, biosynthesis and degradation of lignin, suberization, auxin catabolism, response to environmental stresses such as wounding, pathogen attack and oxidative stress. These functions might be dependent on each isozyme/isoform in each plant tissue. This chain is Peroxidase 70 (PER70), found in Arabidopsis thaliana (Mouse-ear cress).